We begin with the raw amino-acid sequence, 172 residues long: Peptide deformylase (172 aa).

Fe cation is bound by residues C91 and H133. Residue E134 is part of the active site. A Fe cation-binding site is contributed by H137.

This sequence belongs to the polypeptide deformylase family. Fe(2+) serves as cofactor.

The enzyme catalyses N-terminal N-formyl-L-methionyl-[peptide] + H2O = N-terminal L-methionyl-[peptide] + formate. Functionally, removes the formyl group from the N-terminal Met of newly synthesized proteins. Requires at least a dipeptide for an efficient rate of reaction. N-terminal L-methionine is a prerequisite for activity but the enzyme has broad specificity at other positions. This chain is Peptide deformylase, found in Vibrio campbellii (strain ATCC BAA-1116).